The following is a 629-amino-acid chain: DNA-directed RNA polymerase subunit beta' (629 aa).

The Zn(2+) site is built by C70, C72, C85, and C88. Mg(2+)-binding residues include D472, D474, and D476.

The protein belongs to the RNA polymerase beta' chain family. RpoC1 subfamily. In plastids the minimal PEP RNA polymerase catalytic core is composed of four subunits: alpha, beta, beta', and beta''. When a (nuclear-encoded) sigma factor is associated with the core the holoenzyme is formed, which can initiate transcription. Mg(2+) serves as cofactor. The cofactor is Zn(2+).

The protein localises to the plastid. It is found in the chloroplast. The enzyme catalyses RNA(n) + a ribonucleoside 5'-triphosphate = RNA(n+1) + diphosphate. Functionally, DNA-dependent RNA polymerase catalyzes the transcription of DNA into RNA using the four ribonucleoside triphosphates as substrates. This is DNA-directed RNA polymerase subunit beta' from Porphyra purpurea (Red seaweed).